Consider the following 761-residue polypeptide: Spindle assembly abnormal protein 4 (761 aa).

Residues 1–11 show a composition bias toward acidic residues; sequence MLPSENGDEDQ. Residues 1–109 form a disordered region; the sequence is MLPSENGDED…SNERREEDNV (109 aa). The segment covering 51-62 has biased composition (polar residues); sequence TPTNSAPSSART. Basic and acidic residues predominate over residues 90–106; that stretch reads ESHDSGNRSESNERREE. The stretch at 129 to 156 forms a coiled coil; sequence ETCSKVSEEATQLRAEADRITAQANFIN. The span at 164-173 shows a compositional bias: low complexity; that stretch reads TPSSYSSNIS. 2 disordered regions span residues 164 to 228 and 252 to 280; these read TPSS…QARP and PRRQPMLPAHHHPSQKENVPERKAPSEHV. Residues 210-223 are compositionally biased toward polar residues; sequence QTLSSLASSGSLDT. The segment covering 265 to 280 has biased composition (basic and acidic residues); the sequence is SQKENVPERKAPSEHV. Positions 326–464 form a coiled coil; the sequence is RKKQEEAYAK…EKDDREKEMF (139 aa). Low complexity predominate over residues 479 to 497; sequence ATGSAASSRLPSVSSLASS. Positions 479–510 are disordered; it reads ATGSAASSRLPSVSSLASSMKTGSTGKGRTVS.

It localises to the cytoplasm. The protein resides in the cytoskeleton. It is found in the microtubule organizing center. Its subcellular location is the centrosome. In terms of biological role, required for centrosome duplication. Plays a central role in determining centrosome size. In Caenorhabditis briggsae, this protein is Spindle assembly abnormal protein 4 (sas-4).